Consider the following 392-residue polypeptide: S-adenosylmethionine synthase (392 aa).

H17 is an ATP binding site. D19 contacts Mg(2+). E45 serves as a coordination point for K(+). E58 and Q102 together coordinate L-methionine. The tract at residues 102 to 112 (QSADIAQGVDA) is flexible loop. ATP is bound by residues 169–171 (DAK), 235–236 (KF), D244, 250–251 (RK), A267, and K271. Residue D244 coordinates L-methionine. K275 is a binding site for L-methionine.

The protein belongs to the AdoMet synthase family. Homotetramer; dimer of dimers. Requires Mg(2+) as cofactor. K(+) is required as a cofactor.

Its subcellular location is the cytoplasm. The enzyme catalyses L-methionine + ATP + H2O = S-adenosyl-L-methionine + phosphate + diphosphate. The protein operates within amino-acid biosynthesis; S-adenosyl-L-methionine biosynthesis; S-adenosyl-L-methionine from L-methionine: step 1/1. Functionally, catalyzes the formation of S-adenosylmethionine (AdoMet) from methionine and ATP. The overall synthetic reaction is composed of two sequential steps, AdoMet formation and the subsequent tripolyphosphate hydrolysis which occurs prior to release of AdoMet from the enzyme. The protein is S-adenosylmethionine synthase of Methylobacterium radiotolerans (strain ATCC 27329 / DSM 1819 / JCM 2831 / NBRC 15690 / NCIMB 10815 / 0-1).